Reading from the N-terminus, the 392-residue chain is S-adenosylmethionine synthase (392 aa).

Histidine 15 contributes to the ATP binding site. Residue aspartate 17 participates in Mg(2+) binding. Glutamate 43 lines the K(+) pocket. 2 residues coordinate L-methionine: glutamate 56 and glutamine 99. The tract at residues 99-109 (QSKDIAQGVDE) is flexible loop. Residues 173–175 (DGK), 239–240 (KF), aspartate 248, 254–255 (RK), alanine 271, and lysine 275 contribute to the ATP site. Aspartate 248 lines the L-methionine pocket. Position 279 (lysine 279) interacts with L-methionine.

It belongs to the AdoMet synthase family. In terms of assembly, homotetramer; dimer of dimers. The cofactor is Mg(2+). K(+) is required as a cofactor.

The protein resides in the cytoplasm. It carries out the reaction L-methionine + ATP + H2O = S-adenosyl-L-methionine + phosphate + diphosphate. Its pathway is amino-acid biosynthesis; S-adenosyl-L-methionine biosynthesis; S-adenosyl-L-methionine from L-methionine: step 1/1. In terms of biological role, catalyzes the formation of S-adenosylmethionine (AdoMet) from methionine and ATP. The overall synthetic reaction is composed of two sequential steps, AdoMet formation and the subsequent tripolyphosphate hydrolysis which occurs prior to release of AdoMet from the enzyme. The chain is S-adenosylmethionine synthase from Finegoldia magna (strain ATCC 29328 / DSM 20472 / WAL 2508) (Peptostreptococcus magnus).